Consider the following 2667-residue polypeptide: eIF-2-alpha kinase activator GCN1 (2667 aa).

8 HEAT repeats span residues 19–56 (DSFYSEIKELEKSIQSNKLSERKNTLTRINSIGKHELS), 95–132 (QWIFSLVQSLKQLFKDISSATNTSLVTDELKINIVKFT), 159–198 (SFSLVLLNYFIDQIQSNSDLTTLLFAAQELLYRELTLQHM), 293–330 (DLQSIILPPLSRHIKRDQDQVFKILIFILENLSSDFNV), 336–375 (LLKSMLLPMLLPVIQSTISIEENRKLLKKTFTLIIERSKD), 398–439 (SQKL…SISI), 466–503 (ELPEQTIKIITNSLKNDDDIIKGQVILSLSKSLGPEAN), and 794–832 (LLNEELVKLMVKALSYEPVLAITQQQWSIYHTLPTELFV). The interval 842 to 879 (RNDRKVKPKTAEEQRDEESRKRIEEKKKIQSGELEKQE) is disordered. 18 HEAT repeats span residues 929–967 (PIIVALLQLMKHEITNHQFTQVFEKLICCVPSRFKLDRS), 985–1024 (LSEIQILGFIQKILTHIRESIAKEALSGFAFNYFWPIIKN), 1085–1122 (GVETSDIGELMEGIISKHVQVRSICLQAIEKIPSIYSP), 1199–1237 (HMIPEIVDNLFEIYEQNYPDEIRETPITSKFRISVATAL), 1290–1330 (GELL…HMDA), 1333–1370 (PKVSIVIDKLVDALSIPSESVQVGISKCIAQLIPSFKK), 1371–1407 (QGDRLIPMLLEKLKNSSGNYADRRGAAFGLAGSVKGL), 1412–1450 (LKNYSILDTLQSYIEDKKHPTSRQGALFAFECLCNTIGR), 1454–1491 (PYIIHILPKLLVCFGDNVSEVRDATADTAKAIMSQLSG), 1492–1529 (HGVKIVLPALLKALDDRSWRTKEGSIELLGAMAFCAPK), 1533–1570 (SCLPTIVPKLTYVLNDTHTKVQEAAKEALSHIGSVIRN), 1572–1608 (EIQIHVPLLLQTYDDPEIHSKELLENLLSTNYVHTID), 1610–1647 (ASLSLLLPILERTLKERSSELKKMSCQIVGNLCSLTEP), 1652–1689 (PYLNILMPVMKTVLLDPIPEVRAICARALGLLVRGMGE), 1691–1728 (NFSTLIPWLLETVKSDQGAVERSGAAQGLSEVLASLDI), 1729–1766 (SRFNSLINELLAMTNSPRPHVREGILSIFIFTPISLGD), 1770–1807 (PYLPKVLPQVLKGLADDSDPVREVCMRCGQSIVLQFAV), and 1809–1845 (GIEVIVPALEKVLFHENWRIRLSCVQLFGDLLFKLAG). Positions 1853–1875 (SNNSSYNAKDDDDDEPGSSGNDI) are disordered. HEAT repeat units lie at residues 1882-1919 (ERLGRILSSLYMMRFDNNSSVRQKVLLIWKYIVSNTPK), 1923-1960 (EILPTLIEMIISSIGSNNVEKRQISAKTLGDIVSKLSD), 1962-1998 (ILPEILPILERGLRSELEETRQGVCIGLSEVISSAKT), 2002-2039 (PYLSSVVTCITKALCDPLIDVREAAAKAFDHLYHTFGS), 2040-2078 (KASNEILPQLIQLLDNSNNKDLAGYALDGLRQVILVRSS), 2080-2110 (VLPVLIPKLLSRPISTSNVTALSSLAADAGE), 2114-2152 (VHLSTIIPSLIESFTNPNTISNAKEIKEAAVSICKSIDE), 2154-2190 (GWDTLIGLLIEQTEIRLPNIRLGACELIGEFYNGNTM), 2193-2230 (EYPEELLLSLLSLFNDPDALVQQAANNALGFITKSLKK), and 2264-2301 (KGLASVLPVLISGLMYGTSDQREQATNTLRTVINHTSA). Residues 2265–2412 (GLASVLPVLI…ISQESKLRAL (148 aa)) form an RWDBD region region. One copy of the HEAT 37; degenerate repeat lies at 2326–2348 (QVKSAILQTLSLLISKSPASMKI). One copy of the HEAT 38; degenerate repeat lies at 2349–2385 (FLHQLQPTFIKCLSDSHKNVRTNAASALGLLMTLSSS). 4 HEAT repeats span residues 2387 to 2421 (DQLVNSLITGISTADSISQESKLRALQSIFEKKPK), 2425 to 2462 (ATLDKAIATIVDFLYQPSDDLRSMVAQTIGASSKCFTS), 2508 to 2545 (PNMPTIIKIIQTDCRDEKGPIRESSAYLAEAILVASPL), and 2546 to 2583 (TYAKDLVPSICHLIGDQSSSVSISALNVIKRFCKSNQQ).

It belongs to the GCN1 family. Interacts with eif2ak4/gcn2; this interaction stimulates the eif2ak4/gcn2 kinase activity and is impaired by impact upon a variety of stress conditions, such as amino acid depletion, UV-C irradiation, proteasome inhibitor treatment and glucose deprivation. Interacts with impact; this prevents the interaction of gcn1 with eif2ak4/gcn2 and inhibits eif2ak4/gcn2 kinase activity.

The protein localises to the cytoplasm. Ribosome collision sensor that activates a translation quality control pathway when a ribosome has stalled during translation. Directly binds to the ribosome and acts as a sentinel for colliding ribosomes. Gcn1 also acts as a positive activator of the integrated stress response (ISR) by mediating activation of eif2ak4/gcn2 in response to amino acid starvation. Interaction with eif2ak4/gcn2 on translating ribosomes stimulates eif2ak4/gcn2 kinase activity, leading to phosphorylation of eukaryotic translation initiation factor 2 (eIF-2-alpha/eif2s1). EIF2S1/eIF-2-alpha phosphorylation converts EIF2S1/eIF-2-alpha into a global protein synthesis inhibitor, leading to a global attenuation of cap-dependent translation, and thus to a reduced overall utilization of amino acids, while concomitantly initiating the preferential translation of ISR-specific mRNAs, such as the transcriptional activator atf4, and hence allowing atf4-mediated reprogramming of amino acid biosynthetic gene expression to alleviate nutrient depletion. In Dictyostelium discoideum (Social amoeba), this protein is eIF-2-alpha kinase activator GCN1.